The chain runs to 149 residues: Arginine repressor (149 aa).

It belongs to the ArgR family.

Its subcellular location is the cytoplasm. Its pathway is amino-acid biosynthesis; L-arginine biosynthesis [regulation]. Functionally, regulates arginine biosynthesis genes. This Geobacillus sp. (strain WCH70) protein is Arginine repressor.